The chain runs to 364 residues: Putative apoptosis inhibitor ORF42 (364 aa).

Residues 24–89 (RLATFRGYEY…CREGVVSAPQ (66 aa)) form a BIR 1 repeat. Residues 83–126 (GVVSAPQQQPPPPPSTSIGAVGGDPRPEDMNVPERGWDPPMSKD) form a disordered region. A compositionally biased stretch (basic and acidic residues) spans 117–126 (RGWDPPMSKD). 2 BIR repeats span residues 127 to 193 (PKST…PLVV) and 236 to 300 (RIAS…ANMA). Residues 315-350 (CVICLGAKADTILKPCLHYSLCYGCSTQVQKCPLCR) form an RING-type zinc finger.

Its function is as follows. May act as an apoptosis inhibitor. This chain is Putative apoptosis inhibitor ORF42, found in Magallana gigas (Pacific oyster).